A 173-amino-acid polypeptide reads, in one-letter code: Cytochrome c-type biogenesis protein CcmE (173 aa).

Residues 1 to 8 are Cytoplasmic-facing; the sequence is MMSRKKRR. A helical; Signal-anchor for type II membrane protein membrane pass occupies residues 9 to 29; sequence LWIVIACGIGLSTAVALMLFA. The Periplasmic portion of the chain corresponds to 30 to 173; that stretch reads FRSSLSFFMS…PAQIEASNNG (144 aa). 2 residues coordinate heme: His-127 and Tyr-131. The tract at residues 145–173 is disordered; sequence KWNPKFGPPPNAGAWDDKSPAQIEASNNG.

The protein belongs to the CcmE/CycJ family.

The protein localises to the cell inner membrane. Its function is as follows. Heme chaperone required for the biogenesis of c-type cytochromes. Transiently binds heme delivered by CcmC and transfers the heme to apo-cytochromes in a process facilitated by CcmF and CcmH. The protein is Cytochrome c-type biogenesis protein CcmE of Acidiphilium cryptum (strain JF-5).